A 406-amino-acid chain; its full sequence is DAZ-associated protein 1 (406 aa).

N-acetylmethionine is present on Met-1. 2 consecutive RRM domains span residues 10–97 (GKLF…RTRP) and 113–190 (NKIF…RAEP). Positions 74–117 (TLDGRNIDPKPCTPRGMQPERTRPKEGWQKGPRSDSSKSNKIFV) are disordered. The segment covering 91-111 (QPERTRPKEGWQKGPRSDSSK) has biased composition (basic and acidic residues). The residue at position 150 (Lys-150) is an N6-acetyllysine. The tract at residues 186 to 406 (KRAEPRDSKN…NVQGFHPYRR (221 aa)) is disordered. The segment covering 195-207 (NQAPGQPGASQWG) has biased composition (polar residues). Positions 247–262 (GPPPAGRGAPPPPPPF) are enriched in pro residues. Arg-253 carries the omega-N-methylarginine modification. Residues 280–294 (FPQGYGAPPQFSFGY) show a composition bias toward low complexity. The span at 295–315 (GPPPPPPDQFAPPGVPPPPAT) shows a compositional bias: pro residues. Residues 363-378 (SDPSQQPPSYGGPSVP) show a composition bias toward low complexity. Residues 379-392 (GSGGPPAGGSGFGR) show a composition bias toward gly residues.

Interacts with DAZ and DAZL. Acetylation at Lys-150 is predominantly observed in the nuclear fraction, and may regulate nucleocytoplasmic transport. As to expression, mainly expressed in testis. Expressed at much lower level in liver, heart and brain. Also expressed in ovary. Expressed throughout testes development, in both the prenatal and postnatal periods.

It localises to the cytoplasm. The protein resides in the nucleus. In terms of biological role, RNA-binding protein, which may be required during spermatogenesis. The protein is DAZ-associated protein 1 (Dazap1) of Mus musculus (Mouse).